Here is a 249-residue protein sequence, read N- to C-terminus: Methyltransferase 1 (249 aa).

It belongs to the FkbM methyltransferase family.

The protein operates within secondary metabolite biosynthesis. In terms of biological role, methyltransferase; part of the pathway that mediates the biosynthesis of tenellin-type 2-pyridones, iron-chelating compounds involved in iron stress tolerance, competition with the natural competitor fungus Metarhizium robertsii and insect hosts infection. Methylates pyridovericin-N-O-(beta-D-glucopyranoside) produced by the UDP-glucosyltransferase GT1 to yield pyridovericin-N-O-(4-O-methyl-beta-D-glucopyranoside) (PMGP). The pathway begins with the assembly of the polyketide-amino acid backbone by the hybrid PKS-NRPS tenS with the help of the enoyl reductase tenC. These enzymes catalyze the synthesis of the pyrrolidine-2-dione intermediates pretellinin A, 11-hydropretellenin A, 12-hydropretellenin A, 13-hydropretellenin A, 14-hydropretellenin A, 12-oxopretellenin A and prototellinin D. The cytochrome P450 monooxygenase tenA then catalyzes an oxidative ring expansion of pretenellin A and 14-hydropretellenin A to form the 2-pyridone core, leading to pretenellin B and pyridovericin, respectively. The cytochrome P450 monooxygenase tenB is then required for the selective N-hydroxylation of the 2-pyridone nitrogen of yield tellinin and 15-hydroxytellenin (15-HT), respectively. The UDP-glucosyltransferase GT1 and the methyltransferase MT1, located outside the tenS gene cluster, contribute to the stepwise glycosylation and methylation of 15-HT to obtain the glycoside pyridovericin-N-O-(4-O-methyl-beta-D-glucopyranoside) (PMGP). Additional related compounds such as 1-O-methyl-15-HT, (8Z)-1-O-methyl-15-HT, and O-methyltenellin A are also produced but the enzymes involved in their biosynthesis have still to be determined. This is Methyltransferase 1 from Beauveria bassiana (strain ARSEF 2860) (White muscardine disease fungus).